The sequence spans 653 residues: ATP-dependent zinc metalloprotease FtsH 1 (653 aa).

The Cytoplasmic portion of the chain corresponds to 1-7; the sequence is MSRFFKS. Residues 8-28 traverse the membrane as a helical segment; it reads AAFPILIVVVLAFFAQRLINP. At 29–105 the chain is on the extracellular side; that stretch reads GDSGPRYDYS…FDIEGTKSNG (77 aa). A helical membrane pass occupies residues 106–126; that stretch reads WLSLLTYVLPFLIFIGFWIFL. Topologically, residues 127–653 are cytoplasmic; that stretch reads MNQVQGGGSK…MHFPERPELA (527 aa). 198-205 is an ATP binding site; it reads GPPGTGKT. Residue histidine 420 coordinates Zn(2+). The active site involves glutamate 421. Zn(2+) contacts are provided by histidine 424 and aspartate 496. The disordered stretch occupies residues 603–653; that stretch reads EEVFGAEASPPPDVPLPPATERGRDTPRPLPRPGLAGGAAEMHFPERPELA. A compositionally biased stretch (pro residues) spans 611-620; the sequence is SPPPDVPLPP.

This sequence in the central section; belongs to the AAA ATPase family. The protein in the C-terminal section; belongs to the peptidase M41 family. In terms of assembly, homohexamer. The cofactor is Zn(2+).

It is found in the cell membrane. Acts as a processive, ATP-dependent zinc metallopeptidase for both cytoplasmic and membrane proteins. Plays a role in the quality control of integral membrane proteins. This chain is ATP-dependent zinc metalloprotease FtsH 1, found in Conexibacter woesei (strain DSM 14684 / CCUG 47730 / CIP 108061 / JCM 11494 / NBRC 100937 / ID131577).